The sequence spans 302 residues: Sulfate adenylyltransferase subunit 2 (302 aa).

It belongs to the PAPS reductase family. CysD subfamily. As to quaternary structure, heterodimer composed of CysD, the smaller subunit, and CysN.

The catalysed reaction is sulfate + ATP + H(+) = adenosine 5'-phosphosulfate + diphosphate. The protein operates within sulfur metabolism; hydrogen sulfide biosynthesis; sulfite from sulfate: step 1/3. In terms of biological role, with CysN forms the ATP sulfurylase (ATPS) that catalyzes the adenylation of sulfate producing adenosine 5'-phosphosulfate (APS) and diphosphate, the first enzymatic step in sulfur assimilation pathway. APS synthesis involves the formation of a high-energy phosphoric-sulfuric acid anhydride bond driven by GTP hydrolysis by CysN coupled to ATP hydrolysis by CysD. In Shewanella pealeana (strain ATCC 700345 / ANG-SQ1), this protein is Sulfate adenylyltransferase subunit 2.